The sequence spans 375 residues: Palmitoyltransferase PFA4 (375 aa).

Over 1-9 the chain is Cytoplasmic; the sequence is MAVLVKWPW. Residues 10 to 30 traverse the membrane as a helical segment; sequence LGVAIPCFLISFTGYFAHFFV. Residues 31–33 are Lumenal-facing; that stretch reads LTN. The helical transmembrane segment at 34–54 threads the bilayer; the sequence is FLSFKELLWFQVSLSMIWISY. Residues 55–121 lie on the Cytoplasmic side of the membrane; the sequence is WKAIYKNPGR…MNCVGYKNFP (67 aa). Residues 78–128 form the DHHC domain; it reads NYCTKCETYKPERTHHCKRCNQCVLVMDHHCPWTMNCVGYKNFPHFIRFLF. The active-site S-palmitoyl cysteine intermediate is the Cys-108. Residues 122–142 form a helical membrane-spanning segment; that stretch reads HFIRFLFWIIATTGILLHYFV. Residues 143–164 are Lumenal-facing; sequence KRIKFTWVNRYATANLVSKQEL. Residues 165-185 traverse the membrane as a helical segment; sequence IFLTILTPLDAFILLTISLLF. The Cytoplasmic portion of the chain corresponds to 186 to 375; that stretch reads VRCVKNQIVN…EHFGVDVEVE (190 aa).

Belongs to the DHHC palmitoyltransferase family. PFA4 subfamily.

Its subcellular location is the endoplasmic reticulum membrane. The catalysed reaction is L-cysteinyl-[protein] + hexadecanoyl-CoA = S-hexadecanoyl-L-cysteinyl-[protein] + CoA. Functionally, mediates the reversible addition of palmitate to target proteins, thereby regulating their membrane association and biological function. The protein is Palmitoyltransferase PFA4 of Eremothecium gossypii (strain ATCC 10895 / CBS 109.51 / FGSC 9923 / NRRL Y-1056) (Yeast).